Here is a 469-residue protein sequence, read N- to C-terminus: Mannosyl-oligosaccharide 1,2-alpha-mannosidase IA (469 aa).

Residues 1 to 469 (REPADAAVRE…DQKEVEVKVK (469 aa)) lie on the Lumenal side of the membrane. The cysteines at positions 292 and 324 are disulfide-linked. Asn-329 carries an N-linked (GlcNAc...) asparagine glycan. Glu-338 (proton donor) is an active-site residue. Thr-449 contributes to the Ca(2+) binding site.

The protein belongs to the glycosyl hydrolase 47 family. It depends on Ca(2+) as a cofactor.

The protein resides in the golgi apparatus membrane. The catalysed reaction is N(4)-(alpha-D-Man-(1-&gt;2)-alpha-D-Man-(1-&gt;2)-alpha-D-Man-(1-&gt;3)-[alpha-D-Man-(1-&gt;2)-alpha-D-Man-(1-&gt;3)-[alpha-D-Man-(1-&gt;2)-alpha-D-Man-(1-&gt;6)]-alpha-D-Man-(1-&gt;6)]-beta-D-Man-(1-&gt;4)-beta-D-GlcNAc-(1-&gt;4)-beta-D-GlcNAc)-L-asparaginyl-[protein] (N-glucan mannose isomer 9A1,2,3B1,2,3) + 4 H2O = N(4)-(alpha-D-Man-(1-&gt;3)-[alpha-D-Man-(1-&gt;3)-[alpha-D-Man-(1-&gt;6)]-alpha-D-Man-(1-&gt;6)]-beta-D-Man-(1-&gt;4)-beta-D-GlcNAc-(1-&gt;4)-beta-D-GlcNAc)-L-asparaginyl-[protein] (N-glucan mannose isomer 5A1,2) + 4 beta-D-mannose. It catalyses the reaction N(4)-(alpha-D-Man-(1-&gt;2)-alpha-D-Man-(1-&gt;2)-alpha-D-Man-(1-&gt;3)-[alpha-D-Man-(1-&gt;3)-[alpha-D-Man-(1-&gt;2)-alpha-D-Man-(1-&gt;6)]-alpha-D-Man-(1-&gt;6)]-beta-D-Man-(1-&gt;4)-beta-D-GlcNAc-(1-&gt;4)-beta-D-GlcNAc)-L-asparaginyl-[protein] (N-glucan mannose isomer 8A1,2,3B1,3) + 3 H2O = N(4)-(alpha-D-Man-(1-&gt;3)-[alpha-D-Man-(1-&gt;3)-[alpha-D-Man-(1-&gt;6)]-alpha-D-Man-(1-&gt;6)]-beta-D-Man-(1-&gt;4)-beta-D-GlcNAc-(1-&gt;4)-beta-D-GlcNAc)-L-asparaginyl-[protein] (N-glucan mannose isomer 5A1,2) + 3 beta-D-mannose. It participates in protein modification; protein glycosylation. With respect to regulation, inhibited by both 1-deoxymannojirimycin and kifunensine. Involved in the maturation of Asn-linked oligosaccharides. Progressively trim alpha-1,2-linked mannose residues from Man(9)GlcNAc(2) to produce Man(5)GlcNAc(2). The protein is Mannosyl-oligosaccharide 1,2-alpha-mannosidase IA (MAN1A1) of Oryctolagus cuniculus (Rabbit).